We begin with the raw amino-acid sequence, 761 residues long: Ribonucleoside-diphosphate reductase subunit alpha (761 aa).

One can recognise an ATP-cone domain in the interval 5 to 95; the sequence is LFVTKRDGRK…IFHLRKKAYG (91 aa). ATP-binding positions include Lys9, 15–21, Thr55, and Lys91; that span reads EKINLDK. GDP is bound at residue Thr209. Residues Cys225 and Cys462 are joined by a disulfide bond. DTTP is bound by residues 232–234, Arg262, and Arg269; that span reads DSL. GDP is bound at residue Asn437. The Proton acceptor role is filled by Asn437. Cys439 (cysteine radical intermediate) is an active-site residue. GDP is bound by residues Glu441 and 623–625; that span reads ETS. Glu441 acts as the Proton acceptor in catalysis.

Belongs to the ribonucleoside diphosphate reductase large chain family. In terms of assembly, tetramer of two alpha and two beta subunits.

It catalyses the reaction a 2'-deoxyribonucleoside 5'-diphosphate + [thioredoxin]-disulfide + H2O = a ribonucleoside 5'-diphosphate + [thioredoxin]-dithiol. Under complex allosteric control mediated by deoxynucleoside triphosphates and ATP binding to separate specificity and activation sites on the alpha subunit. The type of nucleotide bound at the specificity site determines substrate preference. It seems probable that ATP makes the enzyme reduce CDP and UDP, dGTP favors ADP reduction and dTTP favors GDP reduction. Stimulated by ATP and inhibited by dATP binding to the activity site. In terms of biological role, provides the precursors necessary for DNA synthesis. Catalyzes the biosynthesis of deoxyribonucleotides from the corresponding ribonucleotides. This chain is Ribonucleoside-diphosphate reductase subunit alpha (nrdA), found in Buchnera aphidicola subsp. Acyrthosiphon pisum (strain APS) (Acyrthosiphon pisum symbiotic bacterium).